We begin with the raw amino-acid sequence, 211 residues long: Ribosomal RNA small subunit methyltransferase G (211 aa).

Residues G74, L79, A125 to E126, and R140 each bind S-adenosyl-L-methionine.

This sequence belongs to the methyltransferase superfamily. RNA methyltransferase RsmG family.

It is found in the cytoplasm. In terms of biological role, specifically methylates the N7 position of guanine in position 518 of 16S rRNA. The protein is Ribosomal RNA small subunit methyltransferase G of Clavibacter michiganensis subsp. michiganensis (strain NCPPB 382).